We begin with the raw amino-acid sequence, 114 residues long: Hydrogenase maturation factor HypA (114 aa).

Residue His-2 coordinates Ni(2+). Residues Cys-73, Cys-76, Cys-90, and Cys-93 each coordinate Zn(2+).

This sequence belongs to the HypA/HybF family.

Functionally, involved in the maturation of [NiFe] hydrogenases. Required for nickel insertion into the metal center of the hydrogenase. In Klebsiella pneumoniae (strain 342), this protein is Hydrogenase maturation factor HypA.